The primary structure comprises 228 residues: ATP-dependent dethiobiotin synthetase BioD 1 (228 aa).

13–18 (EVGKTV) contacts ATP. Mg(2+) is bound at residue Thr17. Residue Lys38 is part of the active site. Substrate is bound at residue Ser42. Residues Asp55, 116-119 (EGAG), 176-177 (ND), and 205-207 (PWL) each bind ATP. 2 residues coordinate Mg(2+): Asp55 and Glu116.

The protein belongs to the dethiobiotin synthetase family. In terms of assembly, homodimer. The cofactor is Mg(2+).

Its subcellular location is the cytoplasm. The catalysed reaction is (7R,8S)-7,8-diammoniononanoate + CO2 + ATP = (4R,5S)-dethiobiotin + ADP + phosphate + 3 H(+). It functions in the pathway cofactor biosynthesis; biotin biosynthesis; biotin from 7,8-diaminononanoate: step 1/2. Catalyzes a mechanistically unusual reaction, the ATP-dependent insertion of CO2 between the N7 and N8 nitrogen atoms of 7,8-diaminopelargonic acid (DAPA, also called 7,8-diammoniononanoate) to form a ureido ring. This Salmonella typhi protein is ATP-dependent dethiobiotin synthetase BioD 1.